We begin with the raw amino-acid sequence, 240 residues long: MKALVSGIVDLSTIDYPKKASAVIFLYGCNMKCPYCHNLKFMLEHKRGMTVEEIFNDIDFLFADAIVISGGEPTLQKDAVIEIARYAKEKGFPVKIDTNGTHPEVIEELIKNKLIDYVAIDVKCRFDKYKEFVKCREDGEEIKNKILKIIDLCKKNNVFVECRTTFVPKVMDEEDIEDIAKTVKDCDLYAIQQFEPKDAYDEEFKKLPMPKENELRELGKIAKKYIDNVVIRTINGTFEI.

The Radical SAM core domain maps to 14–232 (IDYPKKASAV…KKYIDNVVIR (219 aa)). The [4Fe-4S] cluster site is built by Cys-29, Cys-33, and Cys-36. S-adenosyl-L-methionine is bound by residues 35–37 (YCH), Gly-71, and 126–128 (FDK).

The protein belongs to the organic radical-activating enzymes family. It depends on [4Fe-4S] cluster as a cofactor.

It carries out the reaction glycyl-[protein] + reduced [flavodoxin] + S-adenosyl-L-methionine = glycin-2-yl radical-[protein] + semiquinone [flavodoxin] + 5'-deoxyadenosine + L-methionine + H(+). The protein is Putative glycyl-radical enzyme activating enzyme MJ1227 of Methanocaldococcus jannaschii (strain ATCC 43067 / DSM 2661 / JAL-1 / JCM 10045 / NBRC 100440) (Methanococcus jannaschii).